The sequence spans 58 residues: Small ribosomal subunit protein bS21 (58 aa).

Residues 36-58 (EFYEKPSVKRKRKSEAARKRKKF) are disordered. Residues 43 to 58 (VKRKRKSEAARKRKKF) show a composition bias toward basic residues.

This sequence belongs to the bacterial ribosomal protein bS21 family.

The polypeptide is Small ribosomal subunit protein bS21 (Streptococcus uberis (strain ATCC BAA-854 / 0140J)).